Consider the following 414-residue polypeptide: 2,3-diketo-5-methylthiopentyl-1-phosphate enolase (414 aa).

K99 acts as the Proton acceptor in catalysis. Substrate is bound by residues K148, 174–177, H265, G338, and 360–361; these read KDDE and GG. 3 residues coordinate Mg(2+): K174, D176, and E177. K174 carries the post-translational modification N6-carboxylysine.

The protein belongs to the RuBisCO large chain family. Type IV subfamily. In terms of assembly, homodimer. The cofactor is Mg(2+).

It carries out the reaction 5-methylsulfanyl-2,3-dioxopentyl phosphate = 2-hydroxy-5-methylsulfanyl-3-oxopent-1-enyl phosphate. Its pathway is amino-acid biosynthesis; L-methionine biosynthesis via salvage pathway; L-methionine from S-methyl-5-thio-alpha-D-ribose 1-phosphate: step 3/6. In terms of biological role, catalyzes the enolization of 2,3-diketo-5-methylthiopentyl-1-phosphate (DK-MTP-1-P) into 2-hydroxy-3-keto-5-methylthiopentenyl-1-phosphate (HK-MTPenyl-1-P). In Bacillus cereus (strain ZK / E33L), this protein is 2,3-diketo-5-methylthiopentyl-1-phosphate enolase.